A 343-amino-acid chain; its full sequence is Insertion element IS630 uncharacterized 39 kDa protein (343 aa).

This chain is Insertion element IS630 uncharacterized 39 kDa protein, found in Shigella sonnei.